The primary structure comprises 157 residues: Ribosome maturation factor RimP (157 aa).

Belongs to the RimP family.

The protein localises to the cytoplasm. Its function is as follows. Required for maturation of 30S ribosomal subunits. The polypeptide is Ribosome maturation factor RimP (Helicobacter hepaticus (strain ATCC 51449 / 3B1)).